Consider the following 225-residue polypeptide: Uridylate kinase (225 aa).

G9 to S10 contributes to the ATP binding site. UMP is bound at residue G46. The ATP site is built by G47 and R51. UMP is bound by residues D67 and T115–T121. Residues T141, N142, Y147, and D150 each coordinate ATP.

Belongs to the UMP kinase family. In terms of assembly, homohexamer.

It localises to the cytoplasm. It carries out the reaction UMP + ATP = UDP + ADP. Its pathway is pyrimidine metabolism; CTP biosynthesis via de novo pathway; UDP from UMP (UMPK route): step 1/1. Its activity is regulated as follows. Inhibited by UTP. In terms of biological role, catalyzes the reversible phosphorylation of UMP to UDP. This chain is Uridylate kinase, found in Methanococcus maripaludis (strain C7 / ATCC BAA-1331).